The primary structure comprises 225 residues: Uridylate kinase (225 aa).

9-10 (GS) lines the ATP pocket. A UMP-binding site is contributed by Gly-44. Positions 45 and 49 each coordinate ATP. Residues Asp-66 and 114 to 120 (THPGHTT) each bind UMP. Residues Thr-140, Asn-141, Tyr-146, and Asp-149 each coordinate ATP.

This sequence belongs to the UMP kinase family. In terms of assembly, homohexamer.

Its subcellular location is the cytoplasm. The enzyme catalyses UMP + ATP = UDP + ADP. The protein operates within pyrimidine metabolism; CTP biosynthesis via de novo pathway; UDP from UMP (UMPK route): step 1/1. With respect to regulation, inhibited by UTP. Functionally, catalyzes the reversible phosphorylation of UMP to UDP. The protein is Uridylate kinase of Thermococcus gammatolerans (strain DSM 15229 / JCM 11827 / EJ3).